Here is an 878-residue protein sequence, read N- to C-terminus: Aconitate hydratase A (878 aa).

[4Fe-4S] cluster is bound by residues Cys-426, Cys-492, and Cys-495.

The protein belongs to the aconitase/IPM isomerase family. As to quaternary structure, monomer. [4Fe-4S] cluster serves as cofactor.

The catalysed reaction is citrate = D-threo-isocitrate. It carries out the reaction (2S,3R)-3-hydroxybutane-1,2,3-tricarboxylate = 2-methyl-cis-aconitate + H2O. Its pathway is carbohydrate metabolism; tricarboxylic acid cycle; isocitrate from oxaloacetate: step 2/2. It functions in the pathway organic acid metabolism; propanoate degradation. Functionally, involved in the catabolism of short chain fatty acids (SCFA) via the tricarboxylic acid (TCA)(acetyl degradation route) and probably the 2-methylcitrate cycle I (propionate degradation route). Catalyzes the reversible isomerization of citrate to isocitrate via cis-aconitate. Could catalyze the hydration of 2-methyl-cis-aconitate to yield (2R,3S)-2-methylisocitrate. The apo form of AcnA functions as a RNA-binding regulatory protein. This is Aconitate hydratase A (acnA) from Rickettsia felis (strain ATCC VR-1525 / URRWXCal2) (Rickettsia azadi).